Consider the following 765-residue polypeptide: Amyloid beta precursor like protein 2 (765 aa).

The signal sequence occupies residues 1-31; sequence MAATGTAAAAATGKLLVLLLLGLTAPAAALA. The Extracellular segment spans residues 32-695; sequence GYIEALAANA…LREDFSLSSS (664 aa). Positions 46-139 are GFLD subdomain; it reads AVAEPQIAMF…PFKCLVGEFV (94 aa). In terms of domain architecture, E1 spans 46–205; the sequence is AVAEPQIAMF…HGTEYVCCPQ (160 aa). 6 disulfide bridges follow: Cys56/Cys80, Cys91/Cys133, Cys116/Cys123, Cys149/Cys203, Cys160/Cys190, and Cys174/Cys202. Residues 147–205 form a cuBD subdomain region; the sequence is ENCQFFHQERMEVCEKHQRWHTVVKEACLTEGMTLYSYGMLLPCGVDQFHGTEYVCCPQ. The Cu cation site is built by His163, His167, and Tyr184. The segment at 211–301 is disordered; it reads SDSTMSKEEE…EPSSDGTISD (91 aa). Ser216 carries the post-translational modification Phosphoserine. Composition is skewed to acidic residues over residues 218–231 and 240–271; these read EEEE…EEDY and TEAD…EVVE. Over residues 272 to 284 the composition is skewed to basic and acidic residues; that stretch reads DRDYYYDSFKGDD. The BPTI/Kunitz inhibitor domain maps to 308–366; sequence VKAVCSQEAMTGPCRAVMPRWYFDLSKGKCVRFIYGGCGGNRNNFESEDYCMAVCKTMI. Cystine bridges form between Cys312-Cys362, Cys321-Cys345, and Cys337-Cys358. Residues 375–566 enclose the E2 domain; the sequence is DVDVYFETSA…QEIQEEIDEL (192 aa). The residue at position 592 (Ser592) is a Phosphoserine. The tract at residues 597-616 is disordered; that stretch reads EIPPFHPFHPFPSLSENEDT. An O-linked (Xyl...) (chondroitin sulfate) serine glycan is attached at Ser628. A helical transmembrane segment spans residues 696 to 718; it reads ALIGLLVIAVAIATVIVISLVML. At 719–765 the chain is on the cytoplasmic side; it reads RKRQYGTISHGIVEVHPMLTPEERHLNKMQNHGYENPTYKYLEQMQI. The tract at residues 751–765 is interaction with DAB2; sequence GYENPTYKYLEQMQI. Positions 752 to 757 match the NPXY motif motif; it reads YENPTY.

This sequence belongs to the APP family. In terms of assembly, interacts with CPEB1. Interacts (via NPXY motif) with DAB2 (via PID domain); the interaction is impaired by tyrosine phosphorylation of the NPXY motif. Interacts (via cytoplasmic domain) with APBB2/FE65L. Interacts (via intracellular domain) with APBB3/FE65L2.

The protein resides in the membrane. In terms of biological role, may play a role in the regulation of hemostasis. The soluble form may have inhibitory properties towards coagulation factors. May interact with cellular G-protein signaling pathways. May bind to the DNA 5'-GTCACATG-3'(CDEI box). Inhibits trypsin, chymotrypsin, plasmin, factor XIA and plasma and glandular kallikrein. Modulates the Cu/Zn nitric oxide-catalyzed autodegradation of GPC1 heparan sulfate side chains in fibroblasts. The protein is Amyloid beta precursor like protein 2 of Rattus norvegicus (Rat).